The following is a 301-amino-acid chain: NADH-cytochrome b5 reductase 3 (301 aa).

Residue Gly2 is the site of N-myristoyl glycine attachment. In terms of domain architecture, FAD-binding FR-type spans 40 to 152 (DIKYPLRLID…RGPNGLLVYQ (113 aa)). Residue Lys42 is modified to N6-acetyllysine. The residue at position 43 (Tyr43) is a Phosphotyrosine. The residue at position 50 (Lys50) is an N6-acetyllysine. Residues Arg92, Pro93, Tyr94, Val109, Lys111, and Phe114 each coordinate FAD. N6-acetyllysine is present on Lys120. Positions 126, 127, 128, and 185 each coordinate FAD.

This sequence belongs to the flavoprotein pyridine nucleotide cytochrome reductase family. Component of a complex composed of cytochrome b5, NADH-cytochrome b5 reductase (CYB5R3) and MTARC2. Interacts with MTLN; the interaction is required to maintain cellular lipid composition and leads to stimulation of mitochondrial respiratory complex I activity. FAD serves as cofactor.

Its subcellular location is the endoplasmic reticulum membrane. The protein localises to the mitochondrion outer membrane. The catalysed reaction is 2 Fe(III)-[cytochrome b5] + NADH = 2 Fe(II)-[cytochrome b5] + NAD(+) + H(+). In terms of biological role, catalyzes the reduction of two molecules of cytochrome b5 using NADH as the electron donor. The polypeptide is NADH-cytochrome b5 reductase 3 (CYB5R3) (Bos taurus (Bovine)).